A 186-amino-acid polypeptide reads, in one-letter code: Ribosome-recycling factor (186 aa).

This sequence belongs to the RRF family.

It is found in the cytoplasm. Its function is as follows. Responsible for the release of ribosomes from messenger RNA at the termination of protein biosynthesis. May increase the efficiency of translation by recycling ribosomes from one round of translation to another. The chain is Ribosome-recycling factor from Azorhizobium caulinodans (strain ATCC 43989 / DSM 5975 / JCM 20966 / LMG 6465 / NBRC 14845 / NCIMB 13405 / ORS 571).